The sequence spans 204 residues: Large ribosomal subunit protein bL25 (204 aa).

The protein belongs to the bacterial ribosomal protein bL25 family. CTC subfamily. In terms of assembly, part of the 50S ribosomal subunit; part of the 5S rRNA/L5/L18/L25 subcomplex. Contacts the 5S rRNA. Binds to the 5S rRNA independently of L5 and L18.

In terms of biological role, this is one of the proteins that binds to the 5S RNA in the ribosome where it forms part of the central protuberance. The sequence is that of Large ribosomal subunit protein bL25 from Pseudomonas aeruginosa (strain LESB58).